Consider the following 573-residue polypeptide: Cytochrome P450 monooxygenase GME11363 (573 aa).

A helical membrane pass occupies residues 10-30 (IGVVAAVLLAALILLYRAALP). C519 is a binding site for heme.

Belongs to the cytochrome P450 family. Heme is required as a cofactor.

Its subcellular location is the membrane. Its pathway is secondary metabolite biosynthesis. Functionally, cytochrome P450 monooxygenase; part of the gene cluster that mediates the biosynthesis of dibenzodioxocinones such as pestalotiollide B, a novel class of inhibitors against cholesterol ester transfer protein (CEPT). The biosynthesis initiates from condensation of acetate and malonate units catalyzed by the non-reducing PKS pks8/GME11356. Pks8/GME11356 lacks a thioesterase (TE) domain, which is important to the cyclizing of the third ring of atrochrysone carboxylic acid, and the esterase GME11355 might play the role of TE and catalyzes the cyclization reaction of the C ring. The lactamase-like protein GME11357 (or other beta-lactamases in Pestalotiopsis microspora) probably hydrolyzes the thioester bond between the ACP of pks8/GME11356 and the intermediate to release atrochrysone carboxylic acid, which is spontaneously dehydrates to form endocrocin anthrone. Endocrocin anthrone is further converted to emodin via the endocrocin intermediate. Emodin is then oxidized by several enzymes such as the Baeyer-Villiger oxidase GME11358, the oxidoreductase GME11367, the short chain dehydrogenase/reductase GME11373, as well as by other oxidoreductases from the cluster, to modify the A and C rings and open the B ring, and finally yield monodictyphenone. The prenyltransferase GME11375 may catalyze the addition reaction between the C5 side chains and the carbon bone of dibenzodioxocinones. The remaining biochemical reactions to the final product dibenzodioxocinones should be methylation catalyzed by methyltransferase GME11366 and reduction and lactonization reaction catalyzed by a series of oxidordeuctases. The protein is Cytochrome P450 monooxygenase GME11363 of Pestalotiopsis microspora.